Here is a 149-residue protein sequence, read N- to C-terminus: UPF0178 protein HEAR0259 (149 aa).

This sequence belongs to the UPF0178 family.

The polypeptide is UPF0178 protein HEAR0259 (Herminiimonas arsenicoxydans).